We begin with the raw amino-acid sequence, 143 residues long: Transcription antitermination protein NusB (143 aa).

The protein belongs to the NusB family.

Its function is as follows. Involved in transcription antitermination. Required for transcription of ribosomal RNA (rRNA) genes. Binds specifically to the boxA antiterminator sequence of the ribosomal RNA (rrn) operons. The protein is Transcription antitermination protein NusB of Dehalococcoides mccartyi (strain ATCC BAA-2266 / KCTC 15142 / 195) (Dehalococcoides ethenogenes (strain 195)).